Here is a 126-residue protein sequence, read N- to C-terminus: Large ribosomal subunit protein bL12 (126 aa).

The protein belongs to the bacterial ribosomal protein bL12 family. In terms of assembly, homodimer. Part of the ribosomal stalk of the 50S ribosomal subunit. Forms a multimeric L10(L12)X complex, where L10 forms an elongated spine to which 2 to 4 L12 dimers bind in a sequential fashion. Binds GTP-bound translation factors.

Its function is as follows. Forms part of the ribosomal stalk which helps the ribosome interact with GTP-bound translation factors. Is thus essential for accurate translation. In Corynebacterium diphtheriae (strain ATCC 700971 / NCTC 13129 / Biotype gravis), this protein is Large ribosomal subunit protein bL12.